The sequence spans 64 residues: Conotoxin mr5.1a (64 aa).

The signal sequence occupies residues 1 to 19 (MRCVPVFVILLLLIASAPS). Positions 20–48 (VDARLKTKDDMPLPSSHANIKRTLQIHRN) are excised as a propeptide. Position 60 is a 4-carboxyglutamate (glutamate 60).

It belongs to the conotoxin T superfamily. Contains 2 disulfide bonds that can be either 'C1-C3, C2-C4' or 'C1-C4, C2-C3', since these disulfide connectivities have been observed for conotoxins with cysteine framework V (for examples, see AC P0DQQ7 and AC P81755). Expressed by the venom duct.

The protein resides in the secreted. This Conus marmoreus (Marble cone) protein is Conotoxin mr5.1a.